A 120-amino-acid chain; its full sequence is Insulin-like peptide 3 (120 aa).

The signal sequence occupies residues 1–29 (MGIEMRCQDRRILLPSLLLLILMIGGVQA). Disulfide bonds link Cys-34–Cys-101, Cys-46–Cys-114, and Cys-100–Cys-105. A propeptide spans 51 to 89 (NAMTKRTLDPVNFNQIDGFEDRSLLERLLSDSSVQMLKT) (connecting peptide).

Belongs to the insulin family. As to quaternary structure, heterodimer of a B chain and an A chain linked by two disulfide bonds. As to expression, expressed at a high level in seven cells of each larval brain hemisphere that may correspond to neurosecretory cells.

The protein localises to the secreted. Possible ligand of InR/insulin-like receptor. This is Insulin-like peptide 3 from Drosophila melanogaster (Fruit fly).